The sequence spans 338 residues: POU domain, class 4, transcription factor 3 (338 aa).

The POU-IV box signature appears at 56–65 (RAEALAAVDI). Residues 179 to 256 (DVESDPRELE…VLQAWLEEAE (78 aa)) form the POU-specific domain. The homeobox DNA-binding region spans 274-333 (RKRKRTSIAAPEKRSLEAYFAIQPRPSSEKIAAIAEKLDLKKNVVRVWFCNQRQKQKRMK).

Belongs to the POU transcription factor family. Class-4 subfamily. Interacts with ISL1. In terms of tissue distribution, brain.

It is found in the nucleus. Its subcellular location is the cytoplasm. Functionally, acts as a transcriptional activator. Acts by binding to sequences related to the consensus octamer motif 5'-ATGCAAAT-3' in the regulatory regions of its target genes. Involved in the auditory system development, required for terminal differentiation of hair cells in the inner ear. The polypeptide is POU domain, class 4, transcription factor 3 (Mus musculus (Mouse)).